The sequence spans 222 residues: UPF0128 protein PF1488 (222 aa).

The protein belongs to the UPF0128 family.

The sequence is that of UPF0128 protein PF1488 from Pyrococcus furiosus (strain ATCC 43587 / DSM 3638 / JCM 8422 / Vc1).